A 388-amino-acid polypeptide reads, in one-letter code: Single-stranded DNA-binding protein 3 (388 aa).

The residue at position 1 (Met1) is an N-acetylmethionine. In terms of domain architecture, LisH spans 16 to 48 (AREKLALYVYEYLLHVGAQKSAQTFLSEIRWEK). A disordered region spans residues 101 to 388 (VLGNIPPNDG…NYSPSMTMSV (288 aa)). Pro residues predominate over residues 126 to 139 (GSQPSPHAQPPPHN). Arg155, Arg161, and Arg165 each carry asymmetric dimethylarginine. Composition is skewed to low complexity over residues 200-209 (MQRMNPPRGM) and 250-268 (PNSA…TYVG). The span at 272-282 (GGGPPGTPIMP) shows a compositional bias: pro residues. Residues 285–296 (ADSTNSSDNIYT) are compositionally biased toward polar residues. Positions 315 to 325 (GSDGPMGGMGG) are enriched in gly residues. Low complexity predominate over residues 346 to 357 (NSPNNISGISNP). Residues Ser347, Ser352, and Ser355 each carry the phosphoserine modification. Position 360 is a phosphothreonine (Thr360). The span at 373–388 (HSFQNDNYSPSMTMSV) shows a compositional bias: polar residues. 2 positions are modified to phosphoserine: Ser381 and Ser387.

Highly expressed in all hematopoietic tissues, including spleen, lymph node, peripheral blood, bone marrow, thymus, and fetal liver, with highest expression in thymus and fetal liver. Expression is also high in heart, brain, kidney, and skeletal muscle.

The protein localises to the nucleus. May be involved in transcription regulation of the alpha 2(I) collagen gene where it binds to the single-stranded polypyrimidine sequences in the promoter region. This is Single-stranded DNA-binding protein 3 (SSBP3) from Homo sapiens (Human).